A 181-amino-acid chain; its full sequence is Ribosome maturation factor RimM (181 aa).

Residues 103 to 181 (EGDYYWSQLE…EMVVDWDPEF (79 aa)) enclose the PRC barrel domain.

The protein belongs to the RimM family. Binds ribosomal protein uS19.

Its subcellular location is the cytoplasm. Its function is as follows. An accessory protein needed during the final step in the assembly of 30S ribosomal subunit, possibly for assembly of the head region. Essential for efficient processing of 16S rRNA. May be needed both before and after RbfA during the maturation of 16S rRNA. It has affinity for free ribosomal 30S subunits but not for 70S ribosomes. The polypeptide is Ribosome maturation factor RimM (Marinomonas sp. (strain MWYL1)).